Here is a 140-residue protein sequence, read N- to C-terminus: MLQAADFIERTETAGELSRGLIGVLSSQISWCLLNVNLSKLPTRLQRLSCSVLNSSPAMRGGARGRPQLTLERPLRPGCRLHSCSEAEKGGFVRRKEIILFPPCEDPARGWLSANPGREPSPGICWHLNLGLPSLHNCEE.

In terms of tissue distribution, highly expressed in peripheral blood leukocytes, spleen, thymus, kidney, pancreas and lung.

This chain is Myelodysplastic syndrome 2 translocation-associated protein (MDS2), found in Homo sapiens (Human).